A 23-amino-acid chain; its full sequence is Dahlein-4.2 (23 aa).

In terms of tissue distribution, expressed by the skin dorsal glands.

Its subcellular location is the secreted. Functionally, has no antimicrobial activity. This Ranoidea dahlii (Dahl's aquatic frog) protein is Dahlein-4.2.